Here is a 1193-residue protein sequence, read N- to C-terminus: DNA-directed RNA polymerase subunit beta (1193 aa).

A compositionally biased stretch (acidic residues) spans 1152 to 1161 (IEMRDLEDDE). The disordered stretch occupies residues 1152-1193 (IEMRDLEDDEETKKADGLALSNDEDAADLAPVDLERDAVTKE). Positions 1184 to 1193 (DLERDAVTKE) are enriched in basic and acidic residues.

The protein belongs to the RNA polymerase beta chain family. The RNAP catalytic core consists of 2 alpha, 1 beta, 1 beta' and 1 omega subunit. When a sigma factor is associated with the core the holoenzyme is formed, which can initiate transcription.

The catalysed reaction is RNA(n) + a ribonucleoside 5'-triphosphate = RNA(n+1) + diphosphate. DNA-dependent RNA polymerase catalyzes the transcription of DNA into RNA using the four ribonucleoside triphosphates as substrates. The polypeptide is DNA-directed RNA polymerase subunit beta (Bacillus pumilus (strain SAFR-032)).